A 243-amino-acid chain; its full sequence is UPF0758 protein alr2351 (243 aa).

The MPN domain occupies 113 to 235; sequence PIDSPVAAVA…HQSLREITTL (123 aa). Zn(2+)-binding residues include His184, His186, and Asp197. The short motif at 184–197 is the JAMM motif element; the sequence is HNHPSGNVEPSPED.

The protein belongs to the UPF0758 family.

The protein is UPF0758 protein alr2351 of Nostoc sp. (strain PCC 7120 / SAG 25.82 / UTEX 2576).